We begin with the raw amino-acid sequence, 673 residues long: MAKPAQGAKYRGSIHDFPGFDPNQDAEALYTAMKGFGSDKEAILDIITSRSNRQRQEVCQSYKSLYGKDLIADLKYELTGKFERLIVGLMRPPAYCDAKEIKDAISGIGTDEKCLIEILASRTNEQMHQLVAAYKDAYERDLEADIIGDTSGHFQKMLVVLLQGTREEDDVVSEDLVQQDVQDLYEAGELKWGTDEAQFIYILGNRSKQHLRLVFDEYLKTTGKPIEASIRGELSGDFEKLMLAVVKCIRSTPEYFAERLFKAMKGLGTRDNTLIRIMVSRSELDMLDIREIFRTKYEKSLYSMIKNDTSGEYKKTLLKLSGGDDDAAGQFFPEAAQVAYQMWELSAVARVELKGTVRPANDFNPDADAKALRKAMKGLGTDEDTIIDIITHRSNVQRQQIRQTFKSHFGRDLMTDLKSEISGDLARLILGLMMPPAHYDAKQLKKAMEGAGTDEKALIEILATRTNAEIRAINEAYKEDYHKSLEDALSSDTSGHFRRILISLATGHREEGGENLDQAREDAQVAAEILEIADTPSGDKTSLETRFMTILCTRSYPHLRRVFQEFIKMTNYDVEHTIKKEMSGDVRDAFVAIVQSVKNKPLFFADKLYKSMKGAGTDEKTLTRIMVSRSEIDLLNIRREFIEKYDKSLHQAIEGDTSGDFLKALLALCGGED.

Alanine 2 is modified (N-acetylalanine). Serine 13 is subject to Phosphoserine. Annexin repeat units lie at residues 20–91 (FDPN…GLMR), 92–163 (PPAY…VLLQ), 175–247 (DLVQ…AVVK), 251–322 (STPE…KLSG), 363–434 (FNPD…GLMM), 435–506 (PPAH…SLAT), 521–595 (EDAQ…AIVQ), and 599–670 (NKPL…ALCG). Tyrosine 30 bears the Phosphotyrosine mark. Lysine 63, lysine 68, lysine 75, and lysine 81 each carry N6-acetyllysine. Tyrosine 201 bears the Phosphotyrosine mark. N6-acetyllysine is present on residues lysine 306, lysine 370, and lysine 418. Position 422 is a phosphoserine (serine 422). Lysine 483 is subject to N6-acetyllysine. Serine 537 carries the post-translational modification Phosphoserine. Lysine 620 carries the N6-acetyllysine modification.

The protein belongs to the annexin family. In terms of processing, phosphorylated in response to growth factor stimulation.

The protein resides in the cytoplasm. It localises to the melanosome. In terms of biological role, may associate with CD21. May regulate the release of Ca(2+) from intracellular stores. The protein is Annexin A6 (ANXA6) of Homo sapiens (Human).